We begin with the raw amino-acid sequence, 152 residues long: Nucleoside diphosphate kinase A 1 (152 aa).

The ATP site is built by lysine 12, phenylalanine 60, arginine 88, threonine 94, arginine 105, and asparagine 115. Histidine 118 (pros-phosphohistidine intermediate) is an active-site residue.

It belongs to the NDK family. Homohexamer. It depends on Mg(2+) as a cofactor. Post-translationally, the N-terminus is blocked.

It localises to the cytoplasm. The protein resides in the cell membrane. Its subcellular location is the nucleus. The enzyme catalyses a 2'-deoxyribonucleoside 5'-diphosphate + ATP = a 2'-deoxyribonucleoside 5'-triphosphate + ADP. The catalysed reaction is a ribonucleoside 5'-diphosphate + ATP = a ribonucleoside 5'-triphosphate + ADP. Its activity is regulated as follows. Autophosphorylation at His-118 increases serine/threonine protein kinase activity of the enzyme. Interaction with the SET complex inhibits exonuclease activity. Major role in the synthesis of nucleoside triphosphates other than ATP. Possesses nucleoside-diphosphate kinase, serine/threonine-specific protein kinase, geranyl and farnesyl pyrophosphate kinase, histidine protein kinase and 3'-5' exonuclease activities. Involved in cell proliferation, differentiation and development, signal transduction, G protein-coupled receptor endocytosis, and gene expression. Required for neural development including neural patterning and cell fate determination. This chain is Nucleoside diphosphate kinase A 1 (NME1-1), found in Bos taurus (Bovine).